Consider the following 23-residue polypeptide: Septenin 2b (23 aa).

In terms of tissue distribution, expressed in skin glands.

The protein resides in the secreted. Functionally, may act as an antimicrobial peptide. This chain is Septenin 2b, found in Osteopilus septentrionalis (Cuban treefrog).